The chain runs to 185 residues: Large ribosomal subunit protein uL16m (185 aa).

This sequence belongs to the universal ribosomal protein uL16 family.

The protein localises to the mitochondrion. The sequence is that of Large ribosomal subunit protein uL16m (RPL16) from Zea mays (Maize).